The chain runs to 374 residues: P2Y purinoceptor 2 (374 aa).

Residues 1-32 (MAAGLDSWNSTINGTWEGDELGYKCRFNEDFK) are Extracellular-facing. Asparagine 9 and asparagine 13 each carry an N-linked (GlcNAc...) asparagine glycan. The helical transmembrane segment at 33 to 59 (YVLLPVSYGVVCVLGLCLNVVALYIFL) threads the bilayer. Residues 60–70 (CRLKTWNASTT) are Cytoplasmic-facing. A helical membrane pass occupies residues 71-93 (YMFHLAVSDSLYAASLPLLVYYY). Residues 94-110 (AQGDHWPFSTVLCKLVR) lie on the Extracellular side of the membrane. A disulfide bridge connects residues cysteine 106 and cysteine 183. Residues 111–129 (FLFYTNLYCSILFLTCISV) form a helical membrane-spanning segment. The Cytoplasmic segment spans residues 130 to 152 (HRCLGVLRPLHSLSWGHARYARR). Residues 153-172 (VAAVVWVLVLACQAPVLYFV) traverse the membrane as a helical segment. Topologically, residues 173-194 (TTSVRGTRITCHDTSARELFSH) are extracellular. The helical transmembrane segment at 195 to 220 (FVAYSSVMLGLLFAVPFSIILVCYVL) threads the bilayer. Residues 221-245 (MARRLLKPAYGTTGLPRAKRKSVRT) lie on the Cytoplasmic side of the membrane. Residues 246–268 (IALVLAVFALCFLPFHVTRTLYY) traverse the membrane as a helical segment. The Extracellular portion of the chain corresponds to 269–286 (SFRSLDLSCHTLNAINMA). A helical transmembrane segment spans residues 287-308 (YKITRPLASANSCLDPVLYFLA). The Cytoplasmic segment spans residues 309 to 374 (GQRLVRFARD…AGSETKDIRL (66 aa)). The disordered stretch occupies residues 318–374 (DAKPATEPTPSPQARRKLGLHRPNRTDTVRKDLSISSDDSRRTESTPAGSETKDIRL). The span at 331–340 (ARRKLGLHRP) shows a compositional bias: basic residues. Residues 341–361 (NRTDTVRKDLSISSDDSRRTE) show a composition bias toward basic and acidic residues.

This sequence belongs to the G-protein coupled receptor 1 family.

Its subcellular location is the cell membrane. Its function is as follows. Receptor for ATP and UTP coupled to G-proteins that activate a phosphatidylinositol-calcium second messenger system. The affinity range is UTP = ATP &gt; ATP-gamma-S &gt;&gt; 2-methylthio-ATP = ADP. This is P2Y purinoceptor 2 (P2ry2) from Rattus norvegicus (Rat).